Consider the following 414-residue polypeptide: Multifunctional CCA protein (414 aa).

Residues Gly8 and Arg11 each coordinate ATP. Gly8 and Arg11 together coordinate CTP. Mg(2+) is bound by residues Glu21 and Asp23. 3 residues coordinate ATP: Arg91, Arg137, and Arg140. CTP-binding residues include Arg91, Arg137, and Arg140. The 102-residue stretch at 228–329 (TGIHTMMTVA…LKLFDAIDVW (102 aa)) folds into the HD domain.

Belongs to the tRNA nucleotidyltransferase/poly(A) polymerase family. Bacterial CCA-adding enzyme type 1 subfamily. In terms of assembly, monomer. Can also form homodimers and oligomers. Requires Mg(2+) as cofactor. The cofactor is Ni(2+).

The enzyme catalyses a tRNA precursor + 2 CTP + ATP = a tRNA with a 3' CCA end + 3 diphosphate. The catalysed reaction is a tRNA with a 3' CCA end + 2 CTP + ATP = a tRNA with a 3' CCACCA end + 3 diphosphate. Functionally, catalyzes the addition and repair of the essential 3'-terminal CCA sequence in tRNAs without using a nucleic acid template. Adds these three nucleotides in the order of C, C, and A to the tRNA nucleotide-73, using CTP and ATP as substrates and producing inorganic pyrophosphate. tRNA 3'-terminal CCA addition is required both for tRNA processing and repair. Also involved in tRNA surveillance by mediating tandem CCA addition to generate a CCACCA at the 3' terminus of unstable tRNAs. While stable tRNAs receive only 3'-terminal CCA, unstable tRNAs are marked with CCACCA and rapidly degraded. The sequence is that of Multifunctional CCA protein from Pectobacterium atrosepticum (strain SCRI 1043 / ATCC BAA-672) (Erwinia carotovora subsp. atroseptica).